The sequence spans 278 residues: NAD-capped RNA hydrolase NudC (278 aa).

R84 contacts substrate. C114 and C117 together coordinate Zn(2+). E127 serves as a coordination point for substrate. Zn(2+) is bound by residues C132 and C135. Substrate is bound at residue Y140. A Nudix hydrolase domain is found at P141 to L265. Positions 174, 190, and 194 each coordinate a divalent metal cation. Positions G175–G196 match the Nudix box motif. Q208–S215 contributes to the substrate binding site. E235 lines the a divalent metal cation pocket. Residue A257 participates in substrate binding.

Belongs to the Nudix hydrolase family. NudC subfamily. As to quaternary structure, homodimer. It depends on Mg(2+) as a cofactor. Requires Mn(2+) as cofactor. Zn(2+) serves as cofactor.

The enzyme catalyses a 5'-end NAD(+)-phospho-ribonucleoside in mRNA + H2O = a 5'-end phospho-adenosine-phospho-ribonucleoside in mRNA + beta-nicotinamide D-ribonucleotide + 2 H(+). The catalysed reaction is NAD(+) + H2O = beta-nicotinamide D-ribonucleotide + AMP + 2 H(+). It carries out the reaction NADH + H2O = reduced beta-nicotinamide D-ribonucleotide + AMP + 2 H(+). Functionally, mRNA decapping enzyme that specifically removes the nicotinamide adenine dinucleotide (NAD) cap from a subset of mRNAs by hydrolyzing the diphosphate linkage to produce nicotinamide mononucleotide (NMN) and 5' monophosphate mRNA. The NAD-cap is present at the 5'-end of some mRNAs and stabilizes RNA against 5'-processing. Has preference for mRNAs with a 5'-end purine. Catalyzes the hydrolysis of a broad range of dinucleotide pyrophosphates. The protein is NAD-capped RNA hydrolase NudC of Pseudomonas aeruginosa (strain ATCC 15692 / DSM 22644 / CIP 104116 / JCM 14847 / LMG 12228 / 1C / PRS 101 / PAO1).